A 326-amino-acid polypeptide reads, in one-letter code: Phospho-N-acetylmuramoyl-pentapeptide-transferase (326 aa).

9 helical membrane passes run 3–23, 51–71, 79–99, 115–135, 138–158, 169–189, 195–215, 221–243, and 306–326; these read ISIS…PAFI, TMGG…LALF, VGMI…DDFL, LALQ…GGDM, VFSY…FWLV, GIDG…GVIA, MDIL…FVFN, VFMG…MALH, and FFFW…LYLM.

Belongs to the glycosyltransferase 4 family. MraY subfamily. Requires Mg(2+) as cofactor.

The protein localises to the cell membrane. It carries out the reaction UDP-N-acetyl-alpha-D-muramoyl-L-alanyl-gamma-D-glutamyl-L-lysyl-D-alanyl-D-alanine + di-trans,octa-cis-undecaprenyl phosphate = Mur2Ac(oyl-L-Ala-gamma-D-Glu-L-Lys-D-Ala-D-Ala)-di-trans,octa-cis-undecaprenyl diphosphate + UMP. It participates in cell wall biogenesis; peptidoglycan biosynthesis. In terms of biological role, catalyzes the initial step of the lipid cycle reactions in the biosynthesis of the cell wall peptidoglycan: transfers peptidoglycan precursor phospho-MurNAc-pentapeptide from UDP-MurNAc-pentapeptide onto the lipid carrier undecaprenyl phosphate, yielding undecaprenyl-pyrophosphoryl-MurNAc-pentapeptide, known as lipid I. This Streptococcus pneumoniae (strain ATCC 700669 / Spain 23F-1) protein is Phospho-N-acetylmuramoyl-pentapeptide-transferase.